Consider the following 580-residue polypeptide: MRPFAYFERLSQAFHDYPSLSKILVVSTISGGGLIVYSEANPSYSNNGVETKTRKRKVVLLGTGWAGASFLKTLNNSSYEVQVISPRNYFAFTPLLPSVTCGTVEARSVVEPIRNIARKQNVEMSFLEAECFKIDPGSKKVYCRSKQGVNSKGKKEFDVDYDYLVIATGAQSNTFNIPGVEENCHFLKEVEDAQRIRSTVIDSFEKASLPGLNEQERKRMLHFVVVGGGPTGVEFASELHDFVNEDLVKLYPKAKNLVQITLLEAADHILTMFDKRITEFAEEKFTRDGIDVKLGSMVVKVNDKEISAKTKAGEVSTIPYGMIVWSTGIGTRPVIKDFMKQIGQGNRRALATDEWLRVEGCDNIYALGDCATINQRKVMEDIAAIFKKADKENSGTLTMKEFHEVMSDICDRYPQVELYLKSKGMHGITDLLKQAQAENGSNKSVELDIEELKSALCQVDSQVKLLPATGQVAAQQGTYLAKCFDRMEVCEKNPEGPIRIRGEGRHRFRPFRYRHLGQFAPLGGEQTAAQLPGDWVSIGHSSQWLWYSVYASKQVSWRTRVLVVSDWMRRFIFGRDSSRI.

Residues 1–38 (MRPFAYFERLSQAFHDYPSLSKILVVSTISGGGLIVYS) constitute a mitochondrion transit peptide. Residue 57–87 (KVVLLGTGWAGASFLKTLNNSSYEVQVISPR) participates in FAD binding. Position 221–257 (221–257 (LHFVVVGGGPTGVEFASELHDFVNEDLVKLYPKAKNL)) interacts with NAD(+). The EF-hand domain maps to 377-412 (KVMEDIAAIFKKADKENSGTLTMKEFHEVMSDICDR). Ca(2+) contacts are provided by Asp-390, Ser-394, Thr-396, and Glu-401. The Microbody targeting signal signature appears at 571 to 580 (FIFGRDSSRI).

Belongs to the NADH dehydrogenase family. Requires FAD as cofactor. As to expression, expressed at low levels in seedlings, roots, stems, buds and flowers and, to a lower extent, in leaves and cotyledons.

It is found in the mitochondrion inner membrane. The protein localises to the peroxisome. It catalyses the reaction a quinone + NADH + H(+) = a quinol + NAD(+). The enzyme catalyses a ubiquinone + NADH + H(+) = a ubiquinol + NAD(+). Alternative NADH-ubiquinone oxidoreductase which catalyzes the oxidation of mitochondrial NADH does not translocate protons across the inner mitochondrial membrane. The sequence is that of External alternative NAD(P)H-ubiquinone oxidoreductase B3, mitochondrial (NDB3) from Arabidopsis thaliana (Mouse-ear cress).